We begin with the raw amino-acid sequence, 214 residues long: Charged multivesicular body protein 2b-B (214 aa).

Residues 25–55 (QRAITRDRAALEKQEKQLEMEIKKMAKTGNK) are a coiled coil. The segment at 178–200 (MAKAPSAAKGLPSTSAAKSKGIS) is disordered. Residues 202 to 212 (EEIERQLKALG) carry the MIT-interacting motif motif.

This sequence belongs to the SNF7 family. In terms of assembly, probable core component of the endosomal sorting required for transport complex III (ESCRT-III). ESCRT-III components are thought to multimerize to form a flat lattice on the perimeter membrane of the endosome.

The protein resides in the cytoplasm. It is found in the cytosol. Its subcellular location is the late endosome membrane. Its function is as follows. Probable core component of the endosomal sorting required for transport complex III (ESCRT-III) which is involved in multivesicular bodies (MVBs) formation and sorting of endosomal cargo proteins into MVBs. MVBs contain intraluminal vesicles (ILVs) that are generated by invagination and scission from the limiting membrane of the endosome and mostly are delivered to lysosomes enabling degradation of membrane proteins, such as stimulated growth factor receptors, lysosomal enzymes and lipids. The polypeptide is Charged multivesicular body protein 2b-B (chmp2b-b) (Xenopus laevis (African clawed frog)).